The following is a 360-amino-acid chain: SUN domain-containing protein 3 (360 aa).

Polar residues predominate over residues 1 to 10; sequence MSGRPNSRGS. Residues 1–39 form a disordered region; the sequence is MSGRPNSRGSSRLFRAPSEDASSGSSGSAVLPQEENPNA. Over 1–47 the chain is Nuclear; sequence MSGRPNSRGSSRLFRAPSEDASSGSSGSAVLPQEENPNASGLTRSWK. Residues 48 to 67 traverse the membrane as a helical segment; the sequence is AVMGMVFILTLLLLGFINHM. At 68 to 360 the chain is on the perinuclear space side; that stretch reads KLKEKAFPQK…RVHGTPKDDS (293 aa). Residues 103 to 142 adopt a coiled-coil conformation; the sequence is KEQLELLKKESQTLENNFREILFLIEQIDVLKALLRDMQD. The 162-residue stretch at 196–357 folds into the SUN domain; the sequence is GASVVEAGTS…YRFRVHGTPK (162 aa).

As to quaternary structure, self-associates. Interacts with SYNE1 and SPAG4/SUN4. Proposed to form a spermatogenesis-specific LINC complex with SYNE1 during sperm head formation possibly implicating a SUN domain-based heterotrimer with SPAG4/SUN4 associating with SYNE1.

The protein localises to the membrane. Its subcellular location is the nucleus envelope. It localises to the nucleus inner membrane. Functionally, as a probable component of the LINC (LInker of Nucleoskeleton and Cytoskeleton) complex, involved in the connection between the nuclear lamina and the cytoskeleton. The nucleocytoplasmic interactions established by the LINC complex play an important role in the transmission of mechanical forces across the nuclear envelope and in nuclear movement and positioning. May be involved in nuclear remodeling during sperm head formation in spermatogenesis. A probable SUN3:SYNE1 LINC complex may tether spermatid nuclei to posterior cytoskeletal structures such as the manchette. In Bos taurus (Bovine), this protein is SUN domain-containing protein 3 (SUN3).